A 118-amino-acid chain; its full sequence is Protein yippee-like 1 (118 aa).

The Yippee domain maps to 19-116 (RTYSCIHCRA…IELAHMIKDN (98 aa)). The Zn(2+) site is built by cysteine 23, cysteine 26, cysteine 79, and cysteine 82. Residues 99 to 104 (KYKEGK) carry the Nuclear localization signal motif.

The protein belongs to the yippee family.

Its subcellular location is the nucleus. May play a role in epithelioid conversion of fibroblasts. The polypeptide is Protein yippee-like 1 (Ypel1) (Mus musculus (Mouse)).